A 203-amino-acid polypeptide reads, in one-letter code: uncharacterized protein (203 aa).

Helical transmembrane passes span 9-29 (YNVF…IVVA), 42-62 (FLFL…FFDV), 86-106 (SGVF…ALLV), and 126-146 (YPLL…SIGL). Composition is skewed to basic and acidic residues over residues 164–174 (GEPTAADKTDS) and 182–191 (DQTKSKKDGD). The interval 164–203 (GEPTAADKTDSRPVVVDLDQTKSKKDGDNPPQASGDMTSL) is disordered. Residues 194–203 (PQASGDMTSL) show a composition bias toward polar residues.

The protein resides in the cell membrane. This is an uncharacterized protein from Mycoplasma pneumoniae (strain ATCC 29342 / M129 / Subtype 1) (Mycoplasmoides pneumoniae).